Consider the following 785-residue polypeptide: Protein SEY1 (785 aa).

Residues 1-690 (MTDLEVSAIQ…KRSVINSKTE (690 aa)) lie on the Cytoplasmic side of the membrane. In terms of domain architecture, GB1/RHD3-type G spans 40 to 266 (GLNYHIVSVF…SEDQLFNEGY (227 aa)). 50–57 (GSQSTGKS) provides a ligand contact to GTP. A coiled-coil region spans residues 451 to 479 (PKLRELEEELSNLRTELVNKEQENIKTKI). A helical transmembrane segment spans residues 691 to 711 (VPLYIYALLLVLGWNEFMIIL). The Lumenal segment spans residues 712–714 (RNP). A helical transmembrane segment spans residues 715-735 (LLITLLLIGLTGLYLGYKTKL). Residues 736–785 (LGPIVQVVQAMIQELQDQAKNKLRDVLVSEPEAPSQVRIGKEVDATKDED) are Cytoplasmic-facing.

It belongs to the TRAFAC class dynamin-like GTPase superfamily. GB1/RHD3 GTPase family. RHD3 subfamily.

It localises to the endoplasmic reticulum membrane. Its function is as follows. Cooperates with the reticulon proteins and tubule-shaping DP1 family proteins to generate and maintain the structure of the tubular endoplasmic reticulum network. Has GTPase activity, which is required for its function in ER organization. In Komagataella phaffii (strain GS115 / ATCC 20864) (Yeast), this protein is Protein SEY1.